Consider the following 335-residue polypeptide: MESIIDAHCHPTDAPQELHLVANLSVGKLIVMGTRPTDQKYVEQLAKEYPGKVIPSFGIHPWFSYYLYDDLDKDLQSSETRKKKHYEKILTPIPDEDFINALPNPVPISEFLEDARRHLKQYPNALIGEIGLDKPFRLPVGPYDARSSLPQGPLSPFYVKMEHQCKVFEAQVRLAAEFQRAVSVHCVQTYALLYSSLAKFWDGRWIPSKTKIRKMKKEEYENSLAEERKHYPPKICLHSYSGSIEQISQFSAHKVPTEFYYSFSIGINSRYKNFIQTLKGVPDDKLLAESDHHSASQIDELVRQSLNVMSEAKSWTFEDTITKISSNSKAFLKVT.

Belongs to the metallo-dependent hydrolases superfamily.

Its function is as follows. Interacts with cut9. This chain is Cut9-interacting protein scn1 (scn1), found in Schizosaccharomyces pombe (strain 972 / ATCC 24843) (Fission yeast).